A 212-amino-acid polypeptide reads, in one-letter code: Agglutinin isolectin 1 (212 aa).

Residues 1 to 26 (MKMMSTRALALGAAAVLAFAAATAQA) form the signal peptide. Residue glutamine 27 is modified to Pyrrolidone carboxylic acid. 4 Chitin-binding type-1 domains span residues 27–68 (QRCG…ACWT), 69–111 (SKRC…PCRA), 112–154 (DIKC…ACST), and 155–197 (DKPC…GCDG). Cystine bridges form between cysteine 29–cysteine 44, cysteine 38–cysteine 50, cysteine 43–cysteine 57, cysteine 61–cysteine 66, cysteine 72–cysteine 87, cysteine 81–cysteine 93, cysteine 86–cysteine 100, cysteine 104–cysteine 109, cysteine 115–cysteine 130, cysteine 124–cysteine 136, cysteine 129–cysteine 143, cysteine 147–cysteine 152, cysteine 158–cysteine 173, cysteine 167–cysteine 179, cysteine 172–cysteine 186, and cysteine 190–cysteine 195. 36–38 (MEC) contributes to the substrate binding site. Substrate is bound at residue 88–99 (SQYGYCGFGAEY). 140–141 (SE) lines the substrate pocket. Residues 198 to 212 (VFAEAITANSTLLQE) constitute a propeptide that is removed on maturation.

In terms of assembly, homodimer, u-shaped.

N-acetyl-D-glucosamine / N-acetyl-D-neuraminic acid binding lectin. This Triticum aestivum (Wheat) protein is Agglutinin isolectin 1.